We begin with the raw amino-acid sequence, 268 residues long: Phosphatidylglycerol--prolipoprotein diacylglyceryl transferase (268 aa).

Transmembrane regions (helical) follow at residues 16 to 36, 56 to 76, and 92 to 112; these read FITL…GIWL, IWLV…FNWG, and GIAI…FTYV. An a 1,2-diacyl-sn-glycero-3-phospho-(1'-sn-glycerol)-binding site is contributed by arginine 136. 3 helical membrane passes run 175-195, 204-224, and 236-256; these read PTFL…LWLF, GTLL…IEGL, and IAQV…FRLY.

It belongs to the Lgt family.

The protein localises to the cell inner membrane. The catalysed reaction is L-cysteinyl-[prolipoprotein] + a 1,2-diacyl-sn-glycero-3-phospho-(1'-sn-glycerol) = an S-1,2-diacyl-sn-glyceryl-L-cysteinyl-[prolipoprotein] + sn-glycerol 1-phosphate + H(+). It participates in protein modification; lipoprotein biosynthesis (diacylglyceryl transfer). Catalyzes the transfer of the diacylglyceryl group from phosphatidylglycerol to the sulfhydryl group of the N-terminal cysteine of a prolipoprotein, the first step in the formation of mature lipoproteins. The sequence is that of Phosphatidylglycerol--prolipoprotein diacylglyceryl transferase from Thermosynechococcus vestitus (strain NIES-2133 / IAM M-273 / BP-1).